The primary structure comprises 167 residues: Putative peroxiredoxin-A (167 aa).

The region spanning I4–L167 is the Thioredoxin domain. C53 serves as the catalytic Cysteine sulfenic acid (-SOH) intermediate. The Microbody targeting signal motif lies at A165–L167.

Belongs to the peroxiredoxin family. Prx5 subfamily.

It localises to the peroxisome membrane. It carries out the reaction a hydroperoxide + [thioredoxin]-dithiol = an alcohol + [thioredoxin]-disulfide + H2O. Its function is as follows. Thiol-specific peroxidase that catalyzes the reduction of hydrogen peroxide and organic hydroperoxides to water and alcohols, respectively. Plays a role in cell protection against oxidative stress by detoxifying peroxides and as sensor of hydrogen peroxide-mediated signaling events. This chain is Putative peroxiredoxin-A (PMPA), found in Candida boidinii (Yeast).